A 1372-amino-acid polypeptide reads, in one-letter code: DNA-directed RNA polymerase subunit beta' (1372 aa).

Zn(2+)-binding residues include cysteine 69, cysteine 71, cysteine 84, and cysteine 87. Mg(2+) contacts are provided by aspartate 460, aspartate 462, and aspartate 464. Zn(2+)-binding residues include cysteine 808, cysteine 882, cysteine 889, and cysteine 892.

This sequence belongs to the RNA polymerase beta' chain family. In terms of assembly, the RNAP catalytic core consists of 2 alpha, 1 beta, 1 beta' and 1 omega subunit. When a sigma factor is associated with the core the holoenzyme is formed, which can initiate transcription. It depends on Mg(2+) as a cofactor. Zn(2+) is required as a cofactor.

It catalyses the reaction RNA(n) + a ribonucleoside 5'-triphosphate = RNA(n+1) + diphosphate. In terms of biological role, DNA-dependent RNA polymerase catalyzes the transcription of DNA into RNA using the four ribonucleoside triphosphates as substrates. This is DNA-directed RNA polymerase subunit beta' from Rickettsia rickettsii (strain Iowa).